A 351-amino-acid chain; its full sequence is Soluble interferon alpha/beta receptor OPG204 (351 aa).

The signal sequence occupies residues 1-19 (MTMKMMVHIYFVSLLLLLF). Ig-like C2-type domains lie at 65 to 147 (LGEP…RSHI) and 155 to 237 (PKTY…IVVS). Cystine bridges form between cysteine 73–cysteine 129 and cysteine 172–cysteine 221. Asparagine 117, asparagine 182, asparagine 261, asparagine 269, and asparagine 321 each carry an N-linked (GlcNAc...) asparagine; by host glycan. The 100-residue stretch at 246 to 345 (PSQDHRFKLI…HNYYFEKTLT (100 aa)) folds into the Ig-like V-type domain. An intrachain disulfide couples cysteine 272 to cysteine 333.

It belongs to the interleukin-1 receptor family. Interacts with host IFNA1.

It localises to the secreted. In terms of biological role, counteracts the antiviral effects of host IFN-alpha/beta and key IFN-inducible proteins involved in viral RNA degradation suxh as host OAS1. Acts as a soluble IFN-alpha receptor and thus inhibits the interaction between host IFN-alpha and its receptor. The chain is Soluble interferon alpha/beta receptor OPG204 (OPG204) from Vaccinia virus (strain Western Reserve) (VACV).